The sequence spans 214 residues: NADH-quinone oxidoreductase subunit C (214 aa).

This sequence belongs to the complex I 30 kDa subunit family. As to quaternary structure, NDH-1 is composed of 14 different subunits. Subunits NuoB, C, D, E, F, and G constitute the peripheral sector of the complex.

It is found in the cell inner membrane. The catalysed reaction is a quinone + NADH + 5 H(+)(in) = a quinol + NAD(+) + 4 H(+)(out). Its function is as follows. NDH-1 shuttles electrons from NADH, via FMN and iron-sulfur (Fe-S) centers, to quinones in the respiratory chain. The immediate electron acceptor for the enzyme in this species is believed to be ubiquinone. Couples the redox reaction to proton translocation (for every two electrons transferred, four hydrogen ions are translocated across the cytoplasmic membrane), and thus conserves the redox energy in a proton gradient. This Francisella tularensis subsp. tularensis (strain WY96-3418) protein is NADH-quinone oxidoreductase subunit C.